Here is a 539-residue protein sequence, read N- to C-terminus: O-phosphoserine--tRNA(Cys) ligase (539 aa).

Substrate-binding positions include 188 to 190 (HMT), 233 to 235 (SAS), 275 to 276 (YY), and asparagine 327.

This sequence belongs to the class-II aminoacyl-tRNA synthetase family. O-phosphoseryl-tRNA(Cys) synthetase subfamily. As to quaternary structure, homotetramer. Interacts with SepCysS.

The enzyme catalyses tRNA(Cys) + O-phospho-L-serine + ATP = O-phospho-L-seryl-tRNA(Cys) + AMP + diphosphate. Catalyzes the attachment of O-phosphoserine (Sep) to tRNA(Cys). The chain is O-phosphoserine--tRNA(Cys) ligase from Methanococcoides burtonii (strain DSM 6242 / NBRC 107633 / OCM 468 / ACE-M).